The sequence spans 346 residues: Heat-inducible transcription repressor HrcA (346 aa).

The protein belongs to the HrcA family.

Its function is as follows. Negative regulator of class I heat shock genes (grpE-dnaK-dnaJ and groELS operons). Prevents heat-shock induction of these operons. The polypeptide is Heat-inducible transcription repressor HrcA (Fructilactobacillus sanfranciscensis (Lactobacillus sanfranciscensis)).